The sequence spans 177 residues: Peptide methionine sulfoxide reductase MsrA (177 aa).

Cys-15 is an active-site residue.

Belongs to the MsrA Met sulfoxide reductase family.

The enzyme catalyses L-methionyl-[protein] + [thioredoxin]-disulfide + H2O = L-methionyl-(S)-S-oxide-[protein] + [thioredoxin]-dithiol. It catalyses the reaction [thioredoxin]-disulfide + L-methionine + H2O = L-methionine (S)-S-oxide + [thioredoxin]-dithiol. Has an important function as a repair enzyme for proteins that have been inactivated by oxidation. Catalyzes the reversible oxidation-reduction of methionine sulfoxide in proteins to methionine. The chain is Peptide methionine sulfoxide reductase MsrA from Listeria innocua serovar 6a (strain ATCC BAA-680 / CLIP 11262).